Consider the following 232-residue polypeptide: Thiamine import ATP-binding protein ThiQ (232 aa).

The region spanning 2–230 is the ABC transporter domain; sequence LKLTDITWLY…KASASALLGI (229 aa). ATP is bound at residue 32–39; that stretch reads GPSGAGKS.

It belongs to the ABC transporter superfamily. Thiamine importer (TC 3.A.1.19.1) family. In terms of assembly, the complex is composed of two ATP-binding proteins (ThiQ), two transmembrane proteins (ThiP) and a solute-binding protein (ThiB).

It is found in the cell inner membrane. The catalysed reaction is thiamine(out) + ATP + H2O = thiamine(in) + ADP + phosphate + H(+). Functionally, part of the ABC transporter complex ThiBPQ involved in thiamine import. Responsible for energy coupling to the transport system. The sequence is that of Thiamine import ATP-binding protein ThiQ from Escherichia coli O157:H7.